A 231-amino-acid polypeptide reads, in one-letter code: Septum site-determining protein MinC (231 aa).

It belongs to the MinC family. As to quaternary structure, interacts with MinD and FtsZ.

Cell division inhibitor that blocks the formation of polar Z ring septums. Rapidly oscillates between the poles of the cell to destabilize FtsZ filaments that have formed before they mature into polar Z rings. Prevents FtsZ polymerization. The protein is Septum site-determining protein MinC of Shigella flexneri.